Consider the following 600-residue polypeptide: Sodium- and chloride-dependent betaine transporter (600 aa).

The tract at residues 1-31 (MGTSEHVPLPTDEAKAKELEQSQHSEEPDRG) is disordered. Topologically, residues 1–38 (MGTSEHVPLPTDEAKAKELEQSQHSEEPDRGQWTGKFD) are cytoplasmic. Basic and acidic residues predominate over residues 12-30 (DEAKAKELEQSQHSEEPDR). A run of 3 helical transmembrane segments spans residues 39–59 (FLMS…FPYL), 68–88 (FLVV…LMEV), and 116–136 (VVIA…AMFY). At 137 to 207 (MISSIAWVFP…DTGDISEFGG (71 aa)) the chain is on the extracellular side. Asparagine 165 carries N-linked (GlcNAc...) asparagine glycosylation. 2 helical membrane passes run 208-228 (IQWE…FALW) and 237-257 (FVYF…IRGL). Asparagine 273 is a glycosylation site (N-linked (GlcNAc...) asparagine). The next 7 helical transmembrane spans lie at 286–306 (AGTQ…ALGS), 321–341 (MCFI…SILG), 378–398 (VFAV…QVCM), 420–440 (SLGI…THSG), 454–474 (GYAL…GFGA), 499–519 (FCAP…YHPV), and 536–556 (WFLS…YLFF). The Cytoplasmic segment spans residues 557-600 (TNKHLTLKERVRKGLNLDGSFESPAKKNLVNNAEELKFIESSSQ).

Belongs to the sodium:neurotransmitter symporter (SNF) family. Highly expressed in the head, the excretory canal, tail hypodermal cells, epidermis and vulval epithelial cells. Expressed in the excretory canal-associated neuron and in some non-amphidial sensory neurons in the head (at protein level).

It localises to the cell membrane. Functionally, betaine transporter dependent on Na(+) and Cl(-) ions that functions primarily in the epidermis to clear betaine from the extracellular space. Elicits current in response to betaine but not in response to GABA, L-carnitine, sarcosine, glycine or dimethylglycine. The sequence is that of Sodium- and chloride-dependent betaine transporter from Caenorhabditis elegans.